The sequence spans 381 residues: N-acetyldiaminopimelate deacetylase (381 aa).

Asp-71 is an active-site residue. Glu-130 (proton acceptor) is an active-site residue.

This sequence belongs to the peptidase M20A family. N-acetyldiaminopimelate deacetylase subfamily.

The catalysed reaction is N-acetyl-(2S,6S)-2,6-diaminopimelate + H2O = (2S,6S)-2,6-diaminopimelate + acetate. The protein operates within amino-acid biosynthesis; L-lysine biosynthesis via DAP pathway; LL-2,6-diaminopimelate from (S)-tetrahydrodipicolinate (acetylase route): step 3/3. Functionally, catalyzes the conversion of N-acetyl-diaminopimelate to diaminopimelate and acetate. The chain is N-acetyldiaminopimelate deacetylase from Ligilactobacillus salivarius (strain UCC118) (Lactobacillus salivarius).